We begin with the raw amino-acid sequence, 50 residues long: Small ribosomal subunit protein uS14 (50 aa).

Positions 15, 18, 33, and 36 each coordinate Zn(2+).

The protein belongs to the universal ribosomal protein uS14 family. Zinc-binding uS14 subfamily. In terms of assembly, part of the 30S ribosomal subunit. Zn(2+) is required as a cofactor.

Its function is as follows. Binds 16S rRNA, required for the assembly of 30S particles. This chain is Small ribosomal subunit protein uS14, found in Methanothermobacter thermautotrophicus (strain ATCC 29096 / DSM 1053 / JCM 10044 / NBRC 100330 / Delta H) (Methanobacterium thermoautotrophicum).